We begin with the raw amino-acid sequence, 445 residues long: Argininosuccinate synthase (445 aa).

ATP contacts are provided by residues 17 to 25 (AFSGGLDTS) and A43. Y99 provides a ligand contact to L-citrulline. Positions 129 and 131 each coordinate ATP. 3 residues coordinate L-aspartate: T131, N135, and D136. Residue N135 participates in L-citrulline binding. D136 provides a ligand contact to ATP. L-citrulline-binding residues include R139 and S192. D194 lines the ATP pocket. 3 residues coordinate L-citrulline: T201, E203, and E280.

Belongs to the argininosuccinate synthase family. Type 2 subfamily. In terms of assembly, homotetramer.

Its subcellular location is the cytoplasm. The enzyme catalyses L-citrulline + L-aspartate + ATP = 2-(N(omega)-L-arginino)succinate + AMP + diphosphate + H(+). It participates in amino-acid biosynthesis; L-arginine biosynthesis; L-arginine from L-ornithine and carbamoyl phosphate: step 2/3. This is Argininosuccinate synthase from Bordetella pertussis (strain Tohama I / ATCC BAA-589 / NCTC 13251).